We begin with the raw amino-acid sequence, 42 residues long: Cytochrome b6-f complex subunit 7 (42 aa).

The chain crosses the membrane as a helical span at residues 19 to 37 (AVTCIFMTLFGLSLGFALL).

Belongs to the PetM family. In terms of assembly, the 4 large subunits of the cytochrome b6-f complex are cytochrome b6, subunit IV (17 kDa polypeptide, PetD), cytochrome f and the Rieske protein, while the 4 small subunits are PetG, PetL, PetM and PetN. The complex functions as a dimer.

The protein resides in the plastid. It localises to the chloroplast thylakoid membrane. In terms of biological role, component of the cytochrome b6-f complex, which mediates electron transfer between photosystem II (PSII) and photosystem I (PSI), cyclic electron flow around PSI, and state transitions. The chain is Cytochrome b6-f complex subunit 7 from Thalassiosira pseudonana (Marine diatom).